A 445-amino-acid polypeptide reads, in one-letter code: MALVDKHKVKRQRLDRICEGIRPQIMNGPLHPRPLVALLDGRDCTVEMPILKDLATVAFCDAQSTQEIHEKVLNEAVGAMMYHTITLTREDLEKFKALRVIVRIGSGYDNVDIKAAGELGIAVCNIPSAAVEETADSTVCHILNLYRRNTWLYQALREGTRVQSVEQIREVASGAARIRGETLGLIGFGRTGQAVAVRAKAFGFSVIFYDPYLQDGIERSLGVQRVYTLQDLLYQSDCVSLHCNLNEHNHHLINDFTIKQMRQGAFLVNAARGGLVDEKALAQALKEGRIRGAALDVHESEPFSFAQGPLKDAPNLICTPHTAWYSEQASLEMREAAATEIRRAITGRIPESLRNCVNKEFFVTSTPWSVIDQQAIHPELNGATYRYPPGIVGVAPGGLPPAMEGIIPGGIPVTHNLPTVAHPSQAPSPNQPTKHGDNREHPNEQ.

Position 22 is an asymmetric dimethylarginine (R22). NAD(+)-binding positions include S106, 186 to 191, D210, 243 to 249, 270 to 272, and D296; these read IGFGRT, CNLNEHN, and AAR. R272 is a catalytic residue. E301 is a catalytic residue. Catalysis depends on H321, which acts as the Proton donor. Residue 321–324 coordinates NAD(+); the sequence is HTAW. A disordered region spans residues 414–445; sequence THNLPTVAHPSQAPSPNQPTKHGDNREHPNEQ. S428 is subject to Phosphoserine; by HIPK2. Residues 434–445 are compositionally biased toward basic and acidic residues; that stretch reads KHGDNREHPNEQ.

It belongs to the D-isomer specific 2-hydroxyacid dehydrogenase family. Interacts with HIPK2, ZNF217 and PNN. Interacts with the transcription factors BKLF, delta EF1/AREB6/ZEB, EVI-1 and Friend of GATA (FOG) via the consensus motif P-X-[DNS]-L-[STVA]. Can form a complex with BKLF on a CACCC-box oligonucleotide. Can form homodimers or heterodimers of CTBP1 and CTBP2. Interacts with NRIP1 and WIZ. Interacts with PRDM16; represses white adipose tissue (WAT)-specific genes expression. Interacts with MCRIP1. Post-translationally, phosphorylation by HIPK2 on Ser-428 induces proteasomal degradation. Isoform 2 is specifically localized in synaptic ribbon (at protein level).

The protein resides in the nucleus. It is found in the synapse. In terms of biological role, corepressor targeting diverse transcription regulators. Functions in brown adipose tissue (BAT) differentiation. Isoform 2 probably acts as a scaffold for specialized synapses. This Rattus norvegicus (Rat) protein is C-terminal-binding protein 2 (Ctbp2).